Consider the following 380-residue polypeptide: Cytochrome b (380 aa).

4 helical membrane-spanning segments follow: residues 33–53 (FGSLLGLCLATQILTGLFLAM), 77–98 (WLIRNIHANGASFFFICIYMHI), 113–133 (WNIGVVLLLLTMMTAFVGYVL), and 178–198 (FFAFHFLFPFVIAAATVLHLL). Residues histidine 83 and histidine 97 each contribute to the heme b site. Residues histidine 182 and histidine 196 each contribute to the heme b site. A ubiquinone is bound at residue histidine 201. 4 consecutive transmembrane segments (helical) span residues 226–246 (YKDLLGFVAMLLGLTSLALFA), 288–308 (LGGVLALLFSILVLMVVPILH), 320–340 (LTQFLFWALVADMLILTWIGG), and 347–367 (FIIIGQVASVIYFTIFLVLSP).

The protein belongs to the cytochrome b family. As to quaternary structure, the cytochrome bc1 complex contains 3 respiratory subunits (MT-CYB, CYC1 and UQCRFS1), 2 core proteins (UQCRC1 and UQCRC2) and probably 6 low-molecular weight proteins. Requires heme b as cofactor.

Its subcellular location is the mitochondrion inner membrane. Functionally, component of the ubiquinol-cytochrome c reductase complex (complex III or cytochrome b-c1 complex) that is part of the mitochondrial respiratory chain. The b-c1 complex mediates electron transfer from ubiquinol to cytochrome c. Contributes to the generation of a proton gradient across the mitochondrial membrane that is then used for ATP synthesis. This chain is Cytochrome b (mt-cyb), found in Oncorhynchus mykiss (Rainbow trout).